Reading from the N-terminus, the 157-residue chain is Large ribosomal subunit protein uL15 (157 aa).

This sequence belongs to the universal ribosomal protein uL15 family. In terms of assembly, part of the 50S ribosomal subunit.

Functionally, binds to the 23S rRNA. In Ehrlichia ruminantium (strain Gardel), this protein is Large ribosomal subunit protein uL15.